A 682-amino-acid chain; its full sequence is DNA-directed RNA polymerase subunit beta' (682 aa).

4 residues coordinate Zn(2+): cysteine 69, cysteine 71, cysteine 87, and cysteine 90. The Mg(2+) site is built by aspartate 489, aspartate 491, and aspartate 493.

Belongs to the RNA polymerase beta' chain family. RpoC1 subfamily. As to quaternary structure, in plastids the minimal PEP RNA polymerase catalytic core is composed of four subunits: alpha, beta, beta', and beta''. When a (nuclear-encoded) sigma factor is associated with the core the holoenzyme is formed, which can initiate transcription. The cofactor is Mg(2+). It depends on Zn(2+) as a cofactor.

The protein localises to the plastid. It is found in the chloroplast. The catalysed reaction is RNA(n) + a ribonucleoside 5'-triphosphate = RNA(n+1) + diphosphate. Functionally, DNA-dependent RNA polymerase catalyzes the transcription of DNA into RNA using the four ribonucleoside triphosphates as substrates. The sequence is that of DNA-directed RNA polymerase subunit beta' from Agrostis stolonifera (Creeping bentgrass).